We begin with the raw amino-acid sequence, 706 residues long: Triadin (706 aa).

A disordered region spans residues 1–28 (MTEITAEGNASTTTTVIDSKNGSVPKSP). Residues 1 to 47 (MTEITAEGNASTTTTVIDSKNGSVPKSPGKVLKRTVTEDLVTTFSSP) lie on the Cytoplasmic side of the membrane. Residues 8 to 24 (GNASTTTTVIDSKNGSV) show a composition bias toward polar residues. The helical transmembrane segment at 48–68 (AAWLLVIALIITWSAVAVVMF) threads the bilayer. Topologically, residues 69–706 (DLVDYKNFSA…GKPNSPGPKQ (638 aa)) are lumenal. N75 is a glycosylation site (N-linked (GlcNAc...) asparagine). Over residues 117–127 (DGDEEDDEGDE) the composition is skewed to acidic residues. Disordered stretches follow at residues 117-265 (DGDE…EQKD), 281-663 (DLKP…KKQK), and 684-706 (FPVTPAQYPGESSGKPNSPGPKQ). 7 stretches are compositionally biased toward basic and acidic residues: residues 128–254 (DTAK…ESKE), 309–358 (PEEK…KSPD), 372–432 (TKKD…KEEV), 443–518 (AKKE…EVKP), 525–552 (IKKEEKPEQDIMKPEKTALHGKPEEKVL), 570–588 (KKAEHQEKEPPSIKTDKPK), and 599–621 (ESGKKKIEKSEKEIKVPARRESH). N625 carries an N-linked (GlcNAc...) asparagine glycan. Basic and acidic residues predominate over residues 628–651 (KAEKPARGSKEGFEDVPASKKAKE).

Interacts with CASQ2. Homooligomer of variable subunit number; disulfide-linked. Interacts with CASQ1 and RYR1 in skeletal muscle. Post-translationally, phosphorylated by CaMK2. In terms of processing, N-glycosylated. Detected in skeletal muscle and in heart (at protein level). Detected in skeletal muscle and in heart.

Its subcellular location is the sarcoplasmic reticulum membrane. In terms of biological role, contributes to the regulation of lumenal Ca2+ release via the sarcoplasmic reticulum calcium release channels RYR1 and RYR2, a key step in triggering skeletal and heart muscle contraction. Required for normal organization of the triad junction, where T-tubules and the sarcoplasmic reticulum terminal cisternae are in close contact. Required for normal skeletal muscle strength. Plays a role in excitation-contraction coupling in the heart and in regulating the rate of heart beats. The protein is Triadin (TRDN) of Oryctolagus cuniculus (Rabbit).